The following is a 549-amino-acid chain: Protein X92 (549 aa).

The polypeptide is Protein X92 (Trypanosoma brucei brucei).